Here is a 311-residue protein sequence, read N- to C-terminus: Formyltransferase/hydrolase complex subunit D (311 aa).

The protein belongs to the FTR family. In terms of assembly, homotetramer. Octaheteromer. Part of the formyltransferase/hydrolase complex fhc; composed of FhcA, FhcB, FhcC and FhcD.

It is found in the cytoplasm. The enzyme catalyses N-formylmethanofuran + 5,6,7,8-tetrahydromethanopterin + H(+) = N(5)-formyl-5,6,7,8-tetrahydromethanopterin + methanofuran. It functions in the pathway one-carbon metabolism; formaldehyde degradation; formate from formaldehyde (H(4)MPT route): step 4/5. In terms of biological role, involved in the transformation of 5-formyl tetrahydromethanopterin (5-formyl-H(4)MPT) to methanofuran (MFR) and formate via the intermediate formylmethanofuran (formyl-MFR). Catalyzes the transfer of a formyl group from 5-formyl-H(4)MPT to MFR to produce tetrahydromethanopterin (H(4)MPT) and formyl-MFR, which is then hydrolyzed to formate and MFR. In Methylorubrum extorquens (strain ATCC 14718 / DSM 1338 / JCM 2805 / NCIMB 9133 / AM1) (Methylobacterium extorquens), this protein is Formyltransferase/hydrolase complex subunit D.